Reading from the N-terminus, the 68-residue chain is uncharacterized protein (68 aa).

The 66-residue stretch at 2 to 67 folds into the HMA domain; that stretch reads KTITLNIKGI…VIEDAGFDAT (66 aa). A metal cation is bound by residues C13 and C16.

This is an uncharacterized protein from Haemophilus influenzae (strain ATCC 51907 / DSM 11121 / KW20 / Rd).